The following is a 692-amino-acid chain: Elongation factor G (692 aa).

Residues 8–282 form the tr-type G domain; that stretch reads EKTRNIGIMA…AVIDYLPSPL (275 aa). GTP contacts are provided by residues 17 to 24, 81 to 85, and 135 to 138; these read AHVDAGKT, DTPGH, and NKMD.

The protein belongs to the TRAFAC class translation factor GTPase superfamily. Classic translation factor GTPase family. EF-G/EF-2 subfamily.

The protein resides in the cytoplasm. In terms of biological role, catalyzes the GTP-dependent ribosomal translocation step during translation elongation. During this step, the ribosome changes from the pre-translocational (PRE) to the post-translocational (POST) state as the newly formed A-site-bound peptidyl-tRNA and P-site-bound deacylated tRNA move to the P and E sites, respectively. Catalyzes the coordinated movement of the two tRNA molecules, the mRNA and conformational changes in the ribosome. In Streptococcus agalactiae serotype III (strain NEM316), this protein is Elongation factor G.